The primary structure comprises 292 residues: Nucleotide-binding protein AZOSEA20610 (292 aa).

8–15 provides a ligand contact to ATP; it reads GLSGSGKS. 57–60 serves as a coordination point for GTP; the sequence is DVRS.

Belongs to the RapZ-like family.

Functionally, displays ATPase and GTPase activities. The sequence is that of Nucleotide-binding protein AZOSEA20610 from Aromatoleum aromaticum (strain DSM 19018 / LMG 30748 / EbN1) (Azoarcus sp. (strain EbN1)).